A 465-amino-acid polypeptide reads, in one-letter code: Neuromedin-K receptor (465 aa).

Over 1 to 84 (MATLPAAETW…TNQFVQPSWR (84 aa)) the chain is Extracellular. Residues asparagine 23, asparagine 50, and asparagine 73 are each glycosylated (N-linked (GlcNAc...) asparagine). Residues 85 to 107 (IALWSLAYGVVVAVAVLGNLIVI) traverse the membrane as a helical segment. Residues 108-117 (WIILAHKRMR) lie on the Cytoplasmic side of the membrane. The chain crosses the membrane as a helical span at residues 118-139 (TVTNYFLVNLAFSDASMAAFNT). At 140 to 159 (LVNFIYALHSEWYFGANYCR) the chain is on the extracellular side. An intrachain disulfide couples cysteine 158 to cysteine 233. Residues 160–181 (FQNFFPITAVFASIYSMTAIAV) traverse the membrane as a helical segment. Over 182–201 (DRYMAIIDPLKPRLSATATK) the chain is Cytoplasmic. Residues 202–222 (IVIGSIWILAFLLAFPQCLYS) traverse the membrane as a helical segment. The Extracellular segment spans residues 223–245 (KTKVMPGRTLCFVQWPEGPKQHF). The helical transmembrane segment at 246-270 (TYHIIVIILVYCFPLLIMGITYTIV) threads the bilayer. Residues 271 to 299 (GITLWGGEIPGDTCDKYHEQLKAKRKVVK) lie on the Cytoplasmic side of the membrane. A helical membrane pass occupies residues 300–321 (MMIIVVMTFAICWLPYHIYFIL). Residues 322–334 (TAIYQQLNRWKYI) are Extracellular-facing. The chain crosses the membrane as a helical span at residues 335–359 (QQVYLASFWLAMSSTMYNPIIYCCL). The Cytoplasmic portion of the chain corresponds to 360-465 (NKRFRAGFKR…SPYTSVDEYS (106 aa)). Cysteine 374 carries the S-palmitoyl cysteine lipid modification. The interval 415–465 (PNDADTTRSSRKKRATPRDPSFNGCSRRNSKSASATSSFISSPYTSVDEYS) is disordered. The span at 445 to 465 (KSASATSSFISSPYTSVDEYS) shows a compositional bias: low complexity.

It belongs to the G-protein coupled receptor 1 family. In terms of processing, the anchoring of this receptor to the plasma membrane is probably mediated by the palmitoylation of a cysteine residue.

The protein localises to the cell membrane. In terms of biological role, this is a receptor for the tachykinin neuropeptide neuromedin-K (neurokinin B). It is associated with G proteins that activate a phosphatidylinositol-calcium second messenger system. The rank order of affinity of this receptor to tachykinins is: neuromedin-K &gt; substance K &gt; substance P. This chain is Neuromedin-K receptor (TACR3), found in Homo sapiens (Human).